The following is a 240-amino-acid chain: 4-hydroxy-tetrahydrodipicolinate reductase (240 aa).

NAD(+) contacts are provided by residues Ala79–Thr81 and Ser103–Met106. The active-site Proton donor/acceptor is His135. His136 is a binding site for (S)-2,3,4,5-tetrahydrodipicolinate. The active-site Proton donor is Lys139. Gly145 to Thr146 is a binding site for (S)-2,3,4,5-tetrahydrodipicolinate.

Belongs to the DapB family.

It localises to the cytoplasm. It carries out the reaction (S)-2,3,4,5-tetrahydrodipicolinate + NAD(+) + H2O = (2S,4S)-4-hydroxy-2,3,4,5-tetrahydrodipicolinate + NADH + H(+). The catalysed reaction is (S)-2,3,4,5-tetrahydrodipicolinate + NADP(+) + H2O = (2S,4S)-4-hydroxy-2,3,4,5-tetrahydrodipicolinate + NADPH + H(+). The protein operates within amino-acid biosynthesis; L-lysine biosynthesis via DAP pathway; (S)-tetrahydrodipicolinate from L-aspartate: step 4/4. Catalyzes the conversion of 4-hydroxy-tetrahydrodipicolinate (HTPA) to tetrahydrodipicolinate. The sequence is that of 4-hydroxy-tetrahydrodipicolinate reductase from Staphylococcus aureus (strain USA300).